A 189-amino-acid polypeptide reads, in one-letter code: Probable nicotinate-nucleotide adenylyltransferase (189 aa).

This sequence belongs to the NadD family.

The enzyme catalyses nicotinate beta-D-ribonucleotide + ATP + H(+) = deamido-NAD(+) + diphosphate. Its pathway is cofactor biosynthesis; NAD(+) biosynthesis; deamido-NAD(+) from nicotinate D-ribonucleotide: step 1/1. Catalyzes the reversible adenylation of nicotinate mononucleotide (NaMN) to nicotinic acid adenine dinucleotide (NaAD). This chain is Probable nicotinate-nucleotide adenylyltransferase, found in Cereibacter sphaeroides (strain ATCC 17023 / DSM 158 / JCM 6121 / CCUG 31486 / LMG 2827 / NBRC 12203 / NCIMB 8253 / ATH 2.4.1.) (Rhodobacter sphaeroides).